We begin with the raw amino-acid sequence, 456 residues long: Cell adhesion molecule 1 (456 aa).

An N-terminal signal peptide occupies residues 1–47; sequence MASAVLPSGSQCAAAAAVAAAAAPPGLRLRLLLLLLSAAALIPTGDG. Residues 48–142 enclose the Ig-like V-type domain; the sequence is QNLFTKDVTV…PPQESYTTIT (95 aa). Residues 48–388 lie on the Extracellular side of the membrane; sequence QNLFTKDVTV…EEGTIGAVDH (341 aa). Cysteines 67 and 127 form a disulfide. N-linked (GlcNAc...) asparagine glycans are attached at residues Asn70, Asn104, Asn116, and Asn168. Ig-like C2-type domains are found at residues 147–241 and 246–332; these read PRNL…RYLE and PQVH…YMLY. Cystine bridges form between Cys169-Cys223 and Cys270-Cys316. N-linked (GlcNAc...) asparagine glycosylation is found at Asn307 and Asn311. The helical transmembrane segment at 389-409 threads the bilayer; it reads AVIGGVVAVVVFAMLCLLIIL. At 410–456 the chain is on the cytoplasmic side; the sequence is GRYFARHKGTYFTHEAKGADDAADADTAIINAEGGQNNSEEKKEYFI. Thr436 carries the phosphothreonine modification. Position 448 is a phosphoserine (Ser448).

This sequence belongs to the nectin family. In terms of assembly, homodimer (via Ig-like V-type domain). Interacts with FARP1. Interacts (via Ig-like V-type domain) with CRTAM (via Ig-like V-type domain); the interaction competes with CRTAM homodimerization and CADM1 homodimerization. Interacts (via C-terminus) with EPB41L3/DAL1. The interaction with EPB41L3/DAL1 may act to anchor CADM1 to the actin cytoskeleton. Interacts (via C-terminus) with MPP2 (via PDZ domain). Interacts (via C-terminus) with MPP3 (via PDZ domain); this interaction connects CADM1 with DLG1. Interacts (via C-terminus) with PALS2 (via PDZ domain). N-glycosylated. In terms of processing, glycosylation at Asn-70 and Asn-104 promotes adhesive binding and synapse induction. In terms of tissue distribution, expressed dominantly in epithelial cells but not expressed in fibroblast cells (at protein level). Expressed in the T-cell area of lymph nodes, specifically in CD8+ and CD4- CD8- dendritic cells (at protein level). Expressed in CD8+ dendritic cells in the spleen (at protein level). Expressed in CD103+ dendritic cells in the small intestine lamina propria and mesenteric lymph nodes (at protein level). Expressed in brain, lung, kidney, testis, heart, spleen and liver, but not expressed in skeletal muscle.

The protein localises to the cell membrane. Its subcellular location is the synaptic cell membrane. Functionally, mediates homophilic cell-cell adhesion in a Ca(2+)-independent manner. Also mediates heterophilic cell-cell adhesion with CADM3 and NECTIN3 in a Ca(2+)-independent manner. Interaction with CRTAM promotes natural killer (NK) cell cytotoxicity and interferon-gamma (IFN-gamma) secretion by CD8+ T-cells in vitro as well as NK cell-mediated rejection of tumors expressing CADM1 in vivo. In mast cells, may mediate attachment to and promote communication with nerves. CADM1, together with MITF, is essential for development and survival of mast cells in vivo. By interacting with CRTAM and thus promoting the adhesion between CD8+ T-cells and CD8+ dendritic cells, regulates the retention of activated CD8+ T-cell within the draining lymph node. Required for the intestinal retention of intraepithelial CD4+ CD8+ T-cells and, to a lesser extent, intraepithelial and lamina propria CD8+ T-cells and CD4+ T-cells. Interaction with CRTAM promotes the adhesion to gut-associated CD103+ dendritic cells, which may facilitate the expression of gut-homing and adhesion molecules on T-cells and the conversion of CD4+ T-cells into CD4+ CD8+ T-cells. Acts as a synaptic cell adhesion molecule and plays a role in the formation of dendritic spines and in synapse assembly. May be involved in neuronal migration, axon growth, pathfinding, and fasciculation on the axons of differentiating neurons. May play diverse roles in the spermatogenesis including in the adhesion of spermatocytes and spermatids to Sertoli cells and for their normal differentiation into mature spermatozoa. This is Cell adhesion molecule 1 from Mus musculus (Mouse).